Reading from the N-terminus, the 242-residue chain is Megakaryocyte and platelet inhibitory receptor G6b (242 aa).

Positions 1 to 17 (MALVLPLLPLLLSKVQG) are cleaved as a signal peptide. N-linked (GlcNAc...) asparagine glycosylation is found at asparagine 32 and asparagine 112. A helical membrane pass occupies residues 141–161 (VLIPLLGVGLVLGLGVAGVVW). Short sequence motifs (ITIM motif) lie at residues 210–215 (LHYADL) and 236–241 (TVYAVV). Residue tyrosine 212 is modified to Phosphotyrosine.

Interacts (via ITIM motif) with PTPN6 and PTPN11. Binds to heparin. Post-translationally, N-glycosylated. May be O-glycosylated. In terms of processing, phosphorylated. Expressed in mature megakaryocytes and platelets. Not expressed by immature megakaryocytes.

It localises to the cell membrane. Inhibitory receptor that acts as a critical regulator of hematopoietic lineage differentiation, megakaryocyte function and platelet production. Inhibits platelet aggregation and activation by agonists such as ADP and collagen-related peptide. This regulation of megakaryocate function as well as platelet production ann activation is done through the inhibition (via the 2 ITIM motifs) of the receptors CLEC1B and GP6:FcRgamma signaling. Appears to operate in a calcium-independent manner. In Mus musculus (Mouse), this protein is Megakaryocyte and platelet inhibitory receptor G6b.